The primary structure comprises 323 residues: Olfactory receptor 51S1 (323 aa).

At 1–33 (MSTLPTQIAPNSSTSMAPTFLLVGMPGLSGAPS) the chain is on the extracellular side. The N-linked (GlcNAc...) asparagine glycan is linked to Asn-11. Residues 34–54 (WWTLPLIAVYLLSALGNGTIL) form a helical membrane-spanning segment. Residues 55 to 62 (WIIALQPA) are Cytoplasmic-facing. Residues 63–83 (LHRPMHFFLFLLSVSDIGLVT) traverse the membrane as a helical segment. Residues 84 to 107 (ALMPTLLGIALAGAHTVPASACLL) are Extracellular-facing. Cys-105 and Cys-197 are oxidised to a cystine. The helical transmembrane segment at 108–128 (QMVFIHVFSVMESSVLLAMSI) threads the bilayer. The Cytoplasmic portion of the chain corresponds to 129-147 (DRALAICRPLHYPALLTNG). The chain crosses the membrane as a helical span at residues 148 to 168 (VISKISLAISFRCLGLHLPLP). Topologically, residues 169-203 (FLLAYMPYCLPQVLTHSYCLHPDVARLACPEAWGA) are extracellular. Residues 204–224 (AYSLFVVLSAMGLDPLLIFFS) form a helical membrane-spanning segment. Residues 225-244 (YGLIGKVLQGVESREDRWKA) lie on the Cytoplasmic side of the membrane. Residues 245-265 (GQTCAAHLSAVLLFYIPMILL) traverse the membrane as a helical segment. Over 266-280 (ALINHPELPITQHTH) the chain is Extracellular. A helical transmembrane segment spans residues 281 to 301 (TLLSYVHFLLPPLINPILYSV). Residues 302 to 323 (KMKEIRKRILNRLQPRKVGGAQ) lie on the Cytoplasmic side of the membrane.

Belongs to the G-protein coupled receptor 1 family.

It is found in the cell membrane. Odorant receptor. The protein is Olfactory receptor 51S1 (OR51S1) of Homo sapiens (Human).